Reading from the N-terminus, the 52-residue chain is UPF0057 membrane protein PA0567 (52 aa).

2 consecutive transmembrane segments (helical) span residues 6-26 (ILIAILLPPLGVFLQVGFGGA) and 29-49 (LNILLTLLGYIPGIVHAVYII).

This sequence belongs to the UPF0057 (PMP3) family.

The protein resides in the cell membrane. This chain is UPF0057 membrane protein PA0567, found in Pseudomonas aeruginosa (strain ATCC 15692 / DSM 22644 / CIP 104116 / JCM 14847 / LMG 12228 / 1C / PRS 101 / PAO1).